The following is a 433-amino-acid chain: Enolase (433 aa).

Positions 37–59 (RAAVPSGASTGEHEAVELRDGDK) are disordered. Basic and acidic residues predominate over residues 47–59 (GEHEAVELRDGDK). Position 166 (Gln166) interacts with (2R)-2-phosphoglycerate. Glu208 (proton donor) is an active-site residue. Asp245, Glu291, and Asp318 together coordinate Mg(2+). Residues Lys343, Arg372, Ser373, and Lys394 each coordinate (2R)-2-phosphoglycerate. The active-site Proton acceptor is Lys343.

This sequence belongs to the enolase family. Mg(2+) serves as cofactor.

The protein resides in the cytoplasm. It localises to the secreted. The protein localises to the cell surface. It catalyses the reaction (2R)-2-phosphoglycerate = phosphoenolpyruvate + H2O. It participates in carbohydrate degradation; glycolysis; pyruvate from D-glyceraldehyde 3-phosphate: step 4/5. In terms of biological role, catalyzes the reversible conversion of 2-phosphoglycerate (2-PG) into phosphoenolpyruvate (PEP). It is essential for the degradation of carbohydrates via glycolysis. This is Enolase from Leptospira biflexa serovar Patoc (strain Patoc 1 / Ames).